Reading from the N-terminus, the 288-residue chain is Bifunctional protein FolD (288 aa).

NADP(+) is bound by residues 166 to 168 (GRS), S191, and I232.

It belongs to the tetrahydrofolate dehydrogenase/cyclohydrolase family. As to quaternary structure, homodimer.

It carries out the reaction (6R)-5,10-methylene-5,6,7,8-tetrahydrofolate + NADP(+) = (6R)-5,10-methenyltetrahydrofolate + NADPH. It catalyses the reaction (6R)-5,10-methenyltetrahydrofolate + H2O = (6R)-10-formyltetrahydrofolate + H(+). It functions in the pathway one-carbon metabolism; tetrahydrofolate interconversion. Functionally, catalyzes the oxidation of 5,10-methylenetetrahydrofolate to 5,10-methenyltetrahydrofolate and then the hydrolysis of 5,10-methenyltetrahydrofolate to 10-formyltetrahydrofolate. The protein is Bifunctional protein FolD of Rickettsia massiliae (strain Mtu5).